The primary structure comprises 241 residues: Chloride intracellular channel protein 1 (241 aa).

At Ala2 the chain carries N-acetylalanine. A required for insertion into the membrane region spans residues 2 to 90; it reads AEEQPQVELF…EEFLEAVLCP (89 aa). At Lys13 the chain carries N6-acetyllysine. The G-site motif lies at 24-27; sequence CPFS. Cys24 and Cys59 are joined by a disulfide. Residues 26 to 46 form a helical membrane-spanning segment; it reads FSQRLFMVLWLKGVTFNVTTV. Positions 93-233 constitute a GST C-terminal domain; that stretch reads YPKLAALNPE…PDDEEIELAY (141 aa). Lys119 carries the post-translational modification N6-acetyllysine. Ser121 is subject to Phosphoserine. N6-acetyllysine is present on Lys131. Ser156 and Ser211 each carry phosphoserine. Tyr233 bears the Phosphotyrosine mark.

The protein belongs to the chloride channel CLIC family. As to quaternary structure, monomer. Homodimer (in vitro). Interacts with TRAPPC2. Dimerization requires a conformation change that leads to the exposure of a large hydrophobic surface. In vivo, this may lead to membrane insertion.

Its subcellular location is the nucleus. It is found in the nucleus membrane. The protein localises to the cytoplasm. It localises to the cell membrane. The protein resides in the endoplasmic reticulum. The enzyme catalyses L-dehydroascorbate + 2 glutathione = glutathione disulfide + L-ascorbate. It catalyses the reaction chloride(in) = chloride(out). It carries out the reaction iodide(out) = iodide(in). The catalysed reaction is thiocyanate(in) = thiocyanate(out). The enzyme catalyses nitrate(in) = nitrate(out). It catalyses the reaction bromide(in) = bromide(out). It carries out the reaction fluoride(in) = fluoride(out). In terms of biological role, in the soluble state, catalyzes glutaredoxin-like thiol disulfide exchange reactions with reduced glutathione as electron donor. Reduces selenite and dehydroascorbate and may act as an antioxidant during oxidative stress response. Can insert into membranes and form voltage-dependent multi-ion conductive channels. Membrane insertion seems to be redox-regulated and may occur only under oxidizing conditions. Involved in regulation of the cell cycle. In Oryctolagus cuniculus (Rabbit), this protein is Chloride intracellular channel protein 1 (CLIC1).